Reading from the N-terminus, the 296-residue chain is Nitrogenase iron protein (296 aa).

Residue 10 to 17 (GKGGIGKS) participates in ATP binding. [4Fe-4S] cluster is bound at residue cysteine 98. Arginine 101 carries the post-translational modification ADP-ribosylarginine; by dinitrogenase reductase ADP-ribosyltransferase. Cysteine 133 serves as a coordination point for [4Fe-4S] cluster.

It belongs to the NifH/BchL/ChlL family. In terms of assembly, homodimer. It depends on [4Fe-4S] cluster as a cofactor. The reversible ADP-ribosylation of Arg-101 inactivates the nitrogenase reductase and regulates nitrogenase activity.

It carries out the reaction N2 + 8 reduced [2Fe-2S]-[ferredoxin] + 16 ATP + 16 H2O = H2 + 8 oxidized [2Fe-2S]-[ferredoxin] + 2 NH4(+) + 16 ADP + 16 phosphate + 6 H(+). In terms of biological role, the key enzymatic reactions in nitrogen fixation are catalyzed by the nitrogenase complex, which has 2 components: the iron protein and the molybdenum-iron protein. In Magnetococcus marinus (strain ATCC BAA-1437 / JCM 17883 / MC-1), this protein is Nitrogenase iron protein.